Reading from the N-terminus, the 221-residue chain is Deoxyribose-phosphate aldolase (221 aa).

The active-site Proton donor/acceptor is the Asp-89. Lys-151 acts as the Schiff-base intermediate with acetaldehyde in catalysis. Catalysis depends on Lys-180, which acts as the Proton donor/acceptor.

Belongs to the DeoC/FbaB aldolase family. DeoC type 1 subfamily.

The protein localises to the cytoplasm. It catalyses the reaction 2-deoxy-D-ribose 5-phosphate = D-glyceraldehyde 3-phosphate + acetaldehyde. Its pathway is carbohydrate degradation; 2-deoxy-D-ribose 1-phosphate degradation; D-glyceraldehyde 3-phosphate and acetaldehyde from 2-deoxy-alpha-D-ribose 1-phosphate: step 2/2. Catalyzes a reversible aldol reaction between acetaldehyde and D-glyceraldehyde 3-phosphate to generate 2-deoxy-D-ribose 5-phosphate. This chain is Deoxyribose-phosphate aldolase, found in Mesomycoplasma hyopneumoniae (strain J / ATCC 25934 / NCTC 10110) (Mycoplasma hyopneumoniae).